We begin with the raw amino-acid sequence, 1040 residues long: Activated CDC42 kinase 1 (1040 aa).

An SAM-like domain region spans residues 1-110; sequence MQPEEGTGWL…PSPTPGGLAG (110 aa). The interval 86-109 is disordered; the sequence is EAEFPSHHSQSTFRKPSPTPGGLA. Phosphothreonine is present on Thr-113. Positions 126–385 constitute a Protein kinase domain; sequence LRLLEKLGDG…PTFVALRDFL (260 aa). Residues 132-140 and Lys-158 each bind ATP; that span reads LGDGSFGVV. Asp-252 (proton acceptor) is an active-site residue. Position 284 is a phosphotyrosine; by SRC and autocatalysis (Tyr-284). The region spanning 388–448 is the SH3 domain; sequence AQPTDMRALQ…PRNVVTSVAG (61 aa). Residues 505 to 527 are disordered; it reads RPTQHLGRMKKPTYDPVSEDPDP. Residue Tyr-518 is modified to Phosphotyrosine. The interval 623–652 is required for interaction with SRC; that stretch reads DWDARPLPPPPAYDDVAQDEDDFEVCSINS. The segment at 632–635 is required for interaction with NEDD4; that stretch reads PPAY. Residues 722–824 are disordered; the sequence is TGQLTPSPTP…MPTTQSFASD (103 aa). An EBD domain region spans residues 733-876; sequence GDDKPQVPPR…PYLERYQRFL (144 aa). Composition is skewed to pro residues over residues 738-749 and 772-783; these read QVPPRVPIPPRP and PSSPPRVPPREP. Low complexity predominate over residues 802–812; the sequence is PLPHRLSSSPG. Position 827 is a phosphotyrosine (Tyr-827). Arg-839 bears the Omega-N-methylarginine mark. Tyr-859 and Tyr-872 each carry phosphotyrosine. Ser-881 is modified (phosphoserine). Residues 881 to 957 form a disordered region; the sequence is SPEEPAALPV…CPGDGQEAAR (77 aa). Residues 888-903 are compositionally biased toward pro residues; the sequence is LPVPPLLPPPSTPAPA. Residues 922–931 are compositionally biased toward polar residues; it reads NFSTNNSNPG. Residues 958–998 enclose the UBA domain; it reads PADKVQMLQAMVHGVTTEECQAALRSHSWSIQRAAQYLKVE.

Belongs to the protein kinase superfamily. Tyr protein kinase family. In terms of assembly, homodimer. Interacts with CDC42. Interacts with CSPG4 (activated). Interacts with MERTK (activated); stimulates autophosphorylation. May interact (phosphorylated) with HSP90AB1; maintains kinase activity. Interacts with NPHP1. Interacts with SNX9 (via SH3 domain). Interacts with SRC (via SH2 and SH3 domain). Interacts with EGFR, and this interaction is dependent on EGF stimulation and kinase activity of EGFR. Interacts (via kinase domain) with AKT1. Part of a collagen stimulated complex involved in cell migration composed of CDC42, CRK, TNK2 and BCAR1/p130cas. Interacts with BCAR1/p130cas via SH3 domains. Forms complexes with GRB2 and numerous receptor tyrosine kinases (RTK) including LTK, AXL or PDGFRL, in which GRB2 promotes RTK recruitment by TNK2. Interacts with NEDD4 (via WW3 domain). NEDD4L and EGF promote association with NEDD4. Mg(2+) is required as a cofactor. Autophosphorylation regulates kinase activity. Phosphorylation on Tyr-518 is required for interaction with SRC and is observed during association with clathrin-coated pits. Post-translationally, polyubiquitinated by NEDD4 and NEDD4L. Degradation can be induced by EGF and is lysosome-dependent.

The protein resides in the cell membrane. It localises to the nucleus. Its subcellular location is the endosome. It is found in the cell junction. The protein localises to the adherens junction. The protein resides in the cytoplasmic vesicle membrane. It localises to the cytoplasmic vesicle. Its subcellular location is the clathrin-coated vesicle. It is found in the membrane. The protein localises to the clathrin-coated pit. The protein resides in the cytoplasm. It localises to the cytosol. The enzyme catalyses L-tyrosyl-[protein] + ATP = O-phospho-L-tyrosyl-[protein] + ADP + H(+). It carries out the reaction L-seryl-[protein] + ATP = O-phospho-L-seryl-[protein] + ADP + H(+). It catalyses the reaction L-threonyl-[protein] + ATP = O-phospho-L-threonyl-[protein] + ADP + H(+). In terms of biological role, non-receptor tyrosine-protein and serine/threonine-protein kinase that is implicated in cell spreading and migration, cell survival, cell growth and proliferation. Transduces extracellular signals to cytosolic and nuclear effectors. Phosphorylates AKT1, AR, MCF2, WASL and WWOX. Implicated in trafficking and clathrin-mediated endocytosis through binding to epidermal growth factor receptor (EGFR) and clathrin. Binds to both poly- and mono-ubiquitin and regulates ligand-induced degradation of EGFR, thereby contributing to the accumulation of EGFR at the limiting membrane of early endosomes. Downstream effector of CDC42 which mediates CDC42-dependent cell migration via phosphorylation of BCAR1. May be involved both in adult synaptic function and plasticity and in brain development. Activates AKT1 by phosphorylating it on 'Tyr-176'. Phosphorylates AR on 'Tyr-267' and 'Tyr-363', thereby promoting its recruitment to androgen-responsive enhancers (AREs). Phosphorylates WWOX on 'Tyr-287'. Phosphorylates MCF2, thereby enhancing its activity as a guanine nucleotide exchange factor (GEF) toward Rho family proteins. Contributes to the control of AXL receptor levels. Confers metastatic properties on cancer cells and promotes tumor growth by negatively regulating tumor suppressor such as WWOX and positively regulating pro-survival factors such as AKT1 and AR. In Rattus norvegicus (Rat), this protein is Activated CDC42 kinase 1.